The sequence spans 740 residues: 1,4-alpha-glucan branching enzyme GlgB (740 aa).

Aspartate 409 (nucleophile) is an active-site residue. The active-site Proton donor is the glutamate 462.

The protein belongs to the glycosyl hydrolase 13 family. GlgB subfamily. As to quaternary structure, monomer.

It carries out the reaction Transfers a segment of a (1-&gt;4)-alpha-D-glucan chain to a primary hydroxy group in a similar glucan chain.. The protein operates within glycan biosynthesis; glycogen biosynthesis. Functionally, catalyzes the formation of the alpha-1,6-glucosidic linkages in glycogen by scission of a 1,4-alpha-linked oligosaccharide from growing alpha-1,4-glucan chains and the subsequent attachment of the oligosaccharide to the alpha-1,6 position. This is 1,4-alpha-glucan branching enzyme GlgB from Methylococcus capsulatus (strain ATCC 33009 / NCIMB 11132 / Bath).